A 307-amino-acid chain; its full sequence is Aspartate carbamoyltransferase catalytic subunit (307 aa).

Carbamoyl phosphate is bound by residues Arg-59 and Thr-60. Lys-87 serves as a coordination point for L-aspartate. Residues Arg-109, His-139, and Gln-142 each coordinate carbamoyl phosphate. Arg-172 and Arg-224 together coordinate L-aspartate. Carbamoyl phosphate is bound by residues Ala-265 and Pro-266.

This sequence belongs to the aspartate/ornithine carbamoyltransferase superfamily. ATCase family. In terms of assembly, heterododecamer (2C3:3R2) of six catalytic PyrB chains organized as two trimers (C3), and six regulatory PyrI chains organized as three dimers (R2).

It carries out the reaction carbamoyl phosphate + L-aspartate = N-carbamoyl-L-aspartate + phosphate + H(+). It participates in pyrimidine metabolism; UMP biosynthesis via de novo pathway; (S)-dihydroorotate from bicarbonate: step 2/3. Functionally, catalyzes the condensation of carbamoyl phosphate and aspartate to form carbamoyl aspartate and inorganic phosphate, the committed step in the de novo pyrimidine nucleotide biosynthesis pathway. The protein is Aspartate carbamoyltransferase catalytic subunit of Streptococcus agalactiae serotype Ia (strain ATCC 27591 / A909 / CDC SS700).